The following is a 188-amino-acid chain: Elongation factor P (188 aa).

This sequence belongs to the elongation factor P family.

It localises to the cytoplasm. It functions in the pathway protein biosynthesis; polypeptide chain elongation. Its function is as follows. Involved in peptide bond synthesis. Stimulates efficient translation and peptide-bond synthesis on native or reconstituted 70S ribosomes in vitro. Probably functions indirectly by altering the affinity of the ribosome for aminoacyl-tRNA, thus increasing their reactivity as acceptors for peptidyl transferase. The polypeptide is Elongation factor P (Rhodopseudomonas palustris (strain BisA53)).